The primary structure comprises 335 residues: Nucleoid-associated protein PputGB1_0980 (335 aa).

It belongs to the YejK family.

It is found in the cytoplasm. Its subcellular location is the nucleoid. The protein is Nucleoid-associated protein PputGB1_0980 of Pseudomonas putida (strain GB-1).